The primary structure comprises 146 residues: Hemoglobin subunit beta (146 aa).

V1 is modified (N-acetylvaline). Residues 2 to 146 form the Globin domain; sequence HLTADEKTAV…VANALAHKYH (145 aa). T12 bears the Phosphothreonine mark. S44 carries the phosphoserine modification. The residue at position 59 (K59) is an N6-acetyllysine. H63 is a heme b binding site. N6-acetyllysine is present on K82. Position 92 (H92) interacts with heme b. Residue C93 is modified to S-nitrosocysteine. K144 carries the N6-acetyllysine modification.

It belongs to the globin family. Heterotetramer of two alpha chains and two beta chains. As to expression, red blood cells.

Involved in oxygen transport from the lung to the various peripheral tissues. The chain is Hemoglobin subunit beta (HBB) from Procyon lotor (Raccoon).